Here is a 187-residue protein sequence, read N- to C-terminus: uncharacterized protein (187 aa).

Basic and acidic residues predominate over residues 139–168 (ESKDRKALKNAARKAEKNAHEESSYFRVDD). The disordered stretch occupies residues 139–172 (ESKDRKALKNAARKAEKNAHEESSYFRVDDPEPE).

This is an uncharacterized protein from Caenorhabditis elegans.